Reading from the N-terminus, the 90-residue chain is Small ribosomal subunit protein bS16 (90 aa).

This sequence belongs to the bacterial ribosomal protein bS16 family.

This is Small ribosomal subunit protein bS16 from Bacillus cytotoxicus (strain DSM 22905 / CIP 110041 / 391-98 / NVH 391-98).